The sequence spans 295 residues: 4-hydroxy-tetrahydrodipicolinate synthase (295 aa).

T46 contacts pyruvate. The active-site Proton donor/acceptor is the Y134. Catalysis depends on K162, which acts as the Schiff-base intermediate with substrate. Residue I205 coordinates pyruvate.

The protein belongs to the DapA family. As to quaternary structure, homotetramer; dimer of dimers.

It localises to the cytoplasm. It catalyses the reaction L-aspartate 4-semialdehyde + pyruvate = (2S,4S)-4-hydroxy-2,3,4,5-tetrahydrodipicolinate + H2O + H(+). Its pathway is amino-acid biosynthesis; L-lysine biosynthesis via DAP pathway; (S)-tetrahydrodipicolinate from L-aspartate: step 3/4. Its function is as follows. Catalyzes the condensation of (S)-aspartate-beta-semialdehyde [(S)-ASA] and pyruvate to 4-hydroxy-tetrahydrodipicolinate (HTPA). This is 4-hydroxy-tetrahydrodipicolinate synthase from Anaeromyxobacter dehalogenans (strain 2CP-1 / ATCC BAA-258).